Reading from the N-terminus, the 120-residue chain is Phosphoribosyl-AMP cyclohydrolase (120 aa).

Residue Asp75 participates in Mg(2+) binding. Cys76 serves as a coordination point for Zn(2+). Mg(2+)-binding residues include Asp77 and Asp79. Zn(2+) contacts are provided by Cys92 and Cys99.

The protein belongs to the PRA-CH family. In terms of assembly, homodimer. Requires Mg(2+) as cofactor. The cofactor is Zn(2+).

It localises to the cytoplasm. The catalysed reaction is 1-(5-phospho-beta-D-ribosyl)-5'-AMP + H2O = 1-(5-phospho-beta-D-ribosyl)-5-[(5-phospho-beta-D-ribosylamino)methylideneamino]imidazole-4-carboxamide. Its pathway is amino-acid biosynthesis; L-histidine biosynthesis; L-histidine from 5-phospho-alpha-D-ribose 1-diphosphate: step 3/9. Catalyzes the hydrolysis of the adenine ring of phosphoribosyl-AMP. This is Phosphoribosyl-AMP cyclohydrolase from Methanosarcina mazei (strain ATCC BAA-159 / DSM 3647 / Goe1 / Go1 / JCM 11833 / OCM 88) (Methanosarcina frisia).